A 417-amino-acid chain; its full sequence is MKTLIILKDLTKVFDNQLILRGINLEIKQNEFVTLLGPSGCGKTTILRILGGFENPSSGEVLFQEKSILNVAAHKRPINTVFQKYALFPHLNVFENVAFGLRLKDFNSKIKANLSLNKTHYQTNKANLSKTFHQELTKDLTQEKTTQITHNFNNQIETLTKDFETKQTALKCKKINKKEQEEQIQKEVLKYLKIMGLQGLEKRTIEQLSGGQQQRVAIARALINKPQVLLLDEPLSNLDLKLKQEMQYELKEIQKNSGITFLFVTHDQEEAFTMSDKVVVMNHGEIQQIGSPEDIYNEPANRFVAQFVGESNLIKGVMKDDFLVHFDNQTFNCVDKGFRKEENVDIVIRPEDIDIVSQGKGLITGIVQSIIFKGVHWEIDVKTAQRTYTIHTTDHVELNKQVDITFNPEDIHVMEIW.

Residues 5-308 (IILKDLTKVF…PANRFVAQFV (304 aa)) enclose the ABC transporter domain. 37 to 44 (GPSGCGKT) provides a ligand contact to ATP. The interval 105-177 (DFNSKIKANL…TALKCKKINK (73 aa)) is insert.

This sequence belongs to the ABC transporter superfamily. Spermidine/putrescine importer (TC 3.A.1.11.1) family. As to quaternary structure, the complex is composed of two ATP-binding proteins (PotA), two transmembrane proteins (PotB and PotC) and a solute-binding protein (PotD).

It localises to the cell membrane. The catalysed reaction is ATP + H2O + polyamine-[polyamine-binding protein]Side 1 = ADP + phosphate + polyamineSide 2 + [polyamine-binding protein]Side 1.. Functionally, part of the ABC transporter complex PotABCD involved in spermidine/putrescine import. Responsible for energy coupling to the transport system. In Onion yellows phytoplasma (strain OY-M), this protein is Spermidine/putrescine import ATP-binding protein PotA.